The sequence spans 313 residues: Formate-nitrite transporter (313 aa).

At 1–46 the chain is on the cytoplasmic side; sequence MTKGSKYTIDPISVKTACTSEESYIRCVEYGKGKAHYPNLSLLAKA. The helical transmembrane segment at 47-67 threads the bilayer; the sequence is ILAGVFVGVCAHASGIAGGHF. Topologically, residues 68–77 are extracellular; sequence YYHKLREHVG. Residues 78-98 traverse the membrane as a helical segment; it reads ISMSAFVYGFTFPIAFLCIIA. At 99–127 the chain is on the cytoplasmic side; that stretch reads TGSDLFTGNTLAVTTALLQRKVTLLEYLR. Residues 128-148 traverse the membrane as a helical segment; sequence VMSISLFGNYVGAVSFAFFVS. Topologically, residues 149-184 are extracellular; sequence HLSGAFKKHEEIGKNHIFQFLNDIAEKKVSHTFVQC. A helical transmembrane segment spans residues 185-205; sequence VCLAIGCNIFVCLAVYFVLTI. Topologically, residues 206–210 are cytoplasmic; it reads KDGSG. The chain crosses the membrane as a helical span at residues 211 to 231; the sequence is MVFSVFFAVYAFAIAGYEHII. At 232-256 the chain is on the extracellular side; that stretch reads ANMYTLNLALMIEANVDWTKVYVDN. Residues 257–277 traverse the membrane as a helical segment; sequence LLPTLIGNYIAGAIVLACPLF. Residues 278–313 lie on the Cytoplasmic side of the membrane; sequence YIYRHSYSDYEKTRGDGGNSGLKSLSIEMQNGSSGR. Residues 290 to 313 form a disordered region; the sequence is TRGDGGNSGLKSLSIEMQNGSSGR. The span at 298–313 shows a compositional bias: polar residues; that stretch reads GLKSLSIEMQNGSSGR.

Belongs to the FNT transporter (TC 1.A.16) family. In terms of assembly, homopentamer.

Its subcellular location is the cell membrane. The protein resides in the vacuole membrane. It carries out the reaction (S)-lactate(in) + H(+)(in) = (S)-lactate(out) + H(+)(out). The enzyme catalyses formate(in) + H(+)(in) = formate(out) + H(+)(out). It catalyses the reaction pyruvate(out) + H(+)(out) = pyruvate(in) + H(+)(in). The catalysed reaction is acetate(out) + H(+)(out) = acetate(in) + H(+)(in). Inhibited by the Malaria Box compound MMV007839 and its derivatives BH296 and BH267.meta. Functionally, monocarboxylate-proton symporter that mediates the efflux of the waste product lactate in the intraerythrocytic parasites; active in acidic-to-neutral pH range. Transports L-lactate. This Plasmodium vivax protein is Formate-nitrite transporter.